The chain runs to 286 residues: Structure-specific endonuclease subunit SLX1 (286 aa).

The GIY-YIG domain occupies 15–98; that stretch reads SFYGVYILKS…QHAYQTRHIN (84 aa).

Belongs to the SLX1 family. In terms of assembly, forms a heterodimer with SLX4. The cofactor is a divalent metal cation.

The protein resides in the nucleus. Functionally, catalytic subunit of the SLX1-SLX4 structure-specific endonuclease that resolves DNA secondary structures generated during DNA repair and recombination. Has endonuclease activity towards branched DNA substrates, introducing single-strand cuts in duplex DNA close to junctions with ss-DNA. The protein is Structure-specific endonuclease subunit SLX1 of Candida dubliniensis (strain CD36 / ATCC MYA-646 / CBS 7987 / NCPF 3949 / NRRL Y-17841) (Yeast).